The chain runs to 364 residues: Probable dual-specificity RNA methyltransferase RlmN (364 aa).

The active-site Proton acceptor is Glu-106. The Radical SAM core domain maps to 112–350 (YPQRNTVCIS…SCTVRDTRGR (239 aa)). Cysteines 119 and 356 form a disulfide. [4Fe-4S] cluster-binding residues include Cys-126, Cys-130, and Cys-133. S-adenosyl-L-methionine-binding positions include 177–178 (GE), Ser-211, 234–236 (SLH), and Asn-313. The S-methylcysteine intermediate role is filled by Cys-356.

Belongs to the radical SAM superfamily. RlmN family. The cofactor is [4Fe-4S] cluster.

It is found in the cytoplasm. The catalysed reaction is adenosine(2503) in 23S rRNA + 2 reduced [2Fe-2S]-[ferredoxin] + 2 S-adenosyl-L-methionine = 2-methyladenosine(2503) in 23S rRNA + 5'-deoxyadenosine + L-methionine + 2 oxidized [2Fe-2S]-[ferredoxin] + S-adenosyl-L-homocysteine. It catalyses the reaction adenosine(37) in tRNA + 2 reduced [2Fe-2S]-[ferredoxin] + 2 S-adenosyl-L-methionine = 2-methyladenosine(37) in tRNA + 5'-deoxyadenosine + L-methionine + 2 oxidized [2Fe-2S]-[ferredoxin] + S-adenosyl-L-homocysteine. Specifically methylates position 2 of adenine 2503 in 23S rRNA and position 2 of adenine 37 in tRNAs. The polypeptide is Probable dual-specificity RNA methyltransferase RlmN (Mycobacterium ulcerans (strain Agy99)).